Here is a 507-residue protein sequence, read N- to C-terminus: Dihydrolipoyl dehydrogenase 2, mitochondrial (507 aa).

A mitochondrion-targeting transit peptide spans 1–36 (MAMASLARRKAYFLTRNISNSPTDAFRFSFSLTRGF). FAD-binding positions include 73–82 (EKRGALGGTC), Lys91, Gly155, and 184–186 (TGS). Cys82 and Cys87 are oxidised to a cystine. NAD(+) contacts are provided by residues 221 to 228 (GAGYIGLE), Glu244, Val278, and Gly313. FAD-binding positions include Asp354 and 360–363 (MLAH). Residue His486 is the Proton acceptor of the active site.

Belongs to the class-I pyridine nucleotide-disulfide oxidoreductase family. In terms of assembly, homodimer. Part of both the glycine cleavage system composed of four proteins: P, T, L and H and of the pyruvate dehydrogenase complex containing multiple copies of three enzymatic components: pyruvate dehydrogenase (E1), dihydrolipoamide acetyltransferase (E2) and lipoamide dehydrogenase (E3). It depends on FAD as a cofactor. S-nytrosylated at unknown positions. Preferentially expressed in roots, flowers and siliques and at a lower level in stems and leaves.

The protein localises to the mitochondrion matrix. It carries out the reaction N(6)-[(R)-dihydrolipoyl]-L-lysyl-[protein] + NAD(+) = N(6)-[(R)-lipoyl]-L-lysyl-[protein] + NADH + H(+). Lipoamide dehydrogenase is a component of the glycine decarboxylase (GDC) or glycine cleavage system as well as of the alpha-ketoacid dehydrogenase complexes. LPD1 is probably the protein most often associated with the glycine decarboxylase complex while LPD2 is probably incorporated into alpha-ketoacid dehydrogenase complexes. The chain is Dihydrolipoyl dehydrogenase 2, mitochondrial (LPD2) from Arabidopsis thaliana (Mouse-ear cress).